The primary structure comprises 161 residues: Phosphopantetheine adenylyltransferase (161 aa).

Serine 11 provides a ligand contact to substrate. Residues 11–12 (SF) and histidine 19 contribute to the ATP site. Substrate-binding residues include lysine 43, leucine 75, and arginine 89. ATP contacts are provided by residues 90–92 (GLR), glutamate 100, and 125–131 (YSFISSS).

Belongs to the bacterial CoaD family. In terms of assembly, homohexamer. Requires Mg(2+) as cofactor.

It localises to the cytoplasm. The enzyme catalyses (R)-4'-phosphopantetheine + ATP + H(+) = 3'-dephospho-CoA + diphosphate. It functions in the pathway cofactor biosynthesis; coenzyme A biosynthesis; CoA from (R)-pantothenate: step 4/5. Reversibly transfers an adenylyl group from ATP to 4'-phosphopantetheine, yielding dephospho-CoA (dPCoA) and pyrophosphate. The polypeptide is Phosphopantetheine adenylyltransferase (Staphylococcus epidermidis (strain ATCC 35984 / DSM 28319 / BCRC 17069 / CCUG 31568 / BM 3577 / RP62A)).